We begin with the raw amino-acid sequence, 191 residues long: Aminodeoxychorismate synthase component 2 (191 aa).

In terms of domain architecture, Glutamine amidotransferase type-1 spans 1 to 191; the sequence is MLLLIDNYDS…HQLLDNFLNR (191 aa). Active-site residues include Cys-79, His-172, and Glu-174.

In terms of assembly, monomer. Heterodimer consisting of two non-identical subunits: a glutamine amidotransferase subunit (PabA) and a aminodeoxychorismate synthase subunit (PabB).

The catalysed reaction is chorismate + L-glutamine = 4-amino-4-deoxychorismate + L-glutamate. It participates in cofactor biosynthesis; tetrahydrofolate biosynthesis; 4-aminobenzoate from chorismate: step 1/2. Part of a heterodimeric complex that catalyzes the two-step biosynthesis of 4-amino-4-deoxychorismate (ADC), a precursor of p-aminobenzoate (PABA) and tetrahydrofolate. In the first step, a glutamine amidotransferase (PabA) generates ammonia as a substrate that, along with chorismate, is used in the second step, catalyzed by aminodeoxychorismate synthase (PabB) to produce ADC. PabA converts glutamine into glutamate only in the presence of stoichiometric amounts of PabB. The chain is Aminodeoxychorismate synthase component 2 (pabA) from Serratia marcescens.